The primary structure comprises 367 residues: Dual specificity protein phosphatase 1 (367 aa).

In terms of domain architecture, Rhodanese spans 20 to 137 (RAAQCLLLDC…FSASCPELCS (118 aa)). The Tyrosine-protein phosphatase domain occupies 173–314 (GPVEILSFLY…LLQFESQVLA (142 aa)). C258 serves as the catalytic Phosphocysteine intermediate. A phosphoserine; by MAPK1 and MAPK3 mark is found at S359 and S364.

Belongs to the protein-tyrosine phosphatase family. Non-receptor class dual specificity subfamily. In terms of processing, phosphorylation at Ser-359 and Ser-364 by MAPK1/ERK2 and MAPK3/ERK1 reduces its rate of degradation. 'Lys-48'-linked polyubiquitinated by NEURL3, leading to proteasomal degradation. As to expression, brain. High level expression seen in the cingulate gyrus within the retrospinal cortex, ventral and medial divisions of the anterior thalamus and the medial geniculate nucleus. Expressed at moderate levels in the parietal and temporal cortex. Expressed in the cerebellum.

It localises to the nucleus. The catalysed reaction is O-phospho-L-tyrosyl-[protein] + H2O = L-tyrosyl-[protein] + phosphate. It catalyses the reaction O-phospho-L-seryl-[protein] + H2O = L-seryl-[protein] + phosphate. The enzyme catalyses O-phospho-L-threonyl-[protein] + H2O = L-threonyl-[protein] + phosphate. In terms of biological role, dual specificity phosphatase that dephosphorylates MAP kinase MAPK1/ERK2 on both 'Thr-183' and 'Tyr-185', regulating its activity during the meiotic cell cycle. In Rattus norvegicus (Rat), this protein is Dual specificity protein phosphatase 1.